The sequence spans 70 residues: Large ribosomal subunit protein bL31 (70 aa).

Zn(2+) contacts are provided by cysteine 16, cysteine 18, cysteine 37, and cysteine 40.

It belongs to the bacterial ribosomal protein bL31 family. Type A subfamily. As to quaternary structure, part of the 50S ribosomal subunit. The cofactor is Zn(2+).

Binds the 23S rRNA. In Saccharophagus degradans (strain 2-40 / ATCC 43961 / DSM 17024), this protein is Large ribosomal subunit protein bL31.